The sequence spans 1053 residues: uncharacterized protein (1053 aa).

It belongs to the mycobacterial PPE family.

This is an uncharacterized protein from Mycobacterium tuberculosis (strain ATCC 25618 / H37Rv).